We begin with the raw amino-acid sequence, 466 residues long: MPAPTTTLLIEGSFSELADEFAQYLDALRKSEGTTTIQAEISPLLEPLRQQEQSDAEPDRKQRDEVLKKLVSAASVLNNAPEKEIISAYNLLVHLIHYASDPDMFLSRICSYLAKPITSSAQFGPSLAISILSTIFNTLAPTDSSRFHVFLGIVAVIRQSGSTVAFEALKPQLTAQLPTWLSSWELDEEEAQRLHLAVADAAQAAGDPELAQTHILQALQTIPAAQASSKEARDLAIRALTSALTHPAVFDFTPLTASDAVQALRSSDSTLFELLEIFTADTLDAYEAFVTATPLAGISGGVLADAGEALQNKMRLLTLASLAASTPSRSLPYATIAASLRVPAEDVEKWVIDTIRAGLVEGKLSQLRSEFLVHRATYRVFGEKQWAEVQGRLMVWRRSLENVLGVLRTERERFVRESLQAAAAAEEAAQGKSNDKGNKSGDRRQRHGNNQQSQQQQQPQEVAAAE.

Residues Glu40–Gln62 are disordered. Positions Ala211–Tyr378 constitute a PCI domain. The tract at residues Ala424 to Glu466 is disordered. The segment covering Ser433 to Arg443 has biased composition (basic and acidic residues). The span at Gln451–Gln460 shows a compositional bias: low complexity.

The protein belongs to the eIF-3 subunit M family. As to quaternary structure, component of the eukaryotic translation initiation factor 3 (eIF-3) complex.

It is found in the cytoplasm. Its function is as follows. Component of the eukaryotic translation initiation factor 3 (eIF-3) complex, which is involved in protein synthesis of a specialized repertoire of mRNAs and, together with other initiation factors, stimulates binding of mRNA and methionyl-tRNAi to the 40S ribosome. The eIF-3 complex specifically targets and initiates translation of a subset of mRNAs involved in cell proliferation. This Aspergillus oryzae (strain ATCC 42149 / RIB 40) (Yellow koji mold) protein is Eukaryotic translation initiation factor 3 subunit M.